The following is a 157-amino-acid chain: Protein Smg homolog (157 aa).

This sequence belongs to the Smg family.

This Shewanella woodyi (strain ATCC 51908 / MS32) protein is Protein Smg homolog.